Consider the following 283-residue polypeptide: Cardiolipin synthase (CMP-forming) (283 aa).

Transmembrane regions (helical) follow at residues Pro83–Phe103, Val155–Ile175, and Leu209–Leu229.

This sequence belongs to the CDP-alcohol phosphatidyltransferase class-I family. May be found in a large complex. Mg(2+) serves as cofactor.

Its subcellular location is the mitochondrion inner membrane. The enzyme catalyses a CDP-1,2-diacyl-sn-glycerol + a 1,2-diacyl-sn-glycero-3-phospho-(1'-sn-glycerol) = a cardiolipin + CMP + H(+). Functionally, catalyzes the synthesis of cardiolipin (CL) (diphosphatidylglycerol) by specifically transferring a phosphatidyl group from CDP-diacylglycerol to phosphatidylglycerol (PG). CL is a key phospholipid in mitochondrial membranes and plays important roles in maintaining the functional integrity and dynamics of mitochondria under both optimal and stress conditions. This is Cardiolipin synthase (CMP-forming) (CRD1) from Saccharomyces cerevisiae (strain ATCC 204508 / S288c) (Baker's yeast).